Consider the following 275-residue polypeptide: MTTLQEKIIQELGVLPTIDPKEEVRKSIDFLKAYLTKHPFLKTFVLGISGGQDSTLAGRLAQLAMTEMREETGDMSYQFIAIRLPYGEQADEADAQAALAFIQPDVSLRVDIKPAVDAMVGSLENAGVQISDFNKGNMKARQRMITQYAVAGENAGAVIGTDHAAENVTAFFTKYGDGGADILPLFRLNKRQGKALLKELGAPEALYLKIPTADLEDDKPLVADEVALGVTYDAIDDYLEGKKVSETDQQTIENWYKKGQHKRHLPITIFDDFWK.

An ATP-binding site is contributed by 47-54 (GISGGQDS). A Mg(2+)-binding site is contributed by D53. R141 is a deamido-NAD(+) binding site. ATP is bound at residue T161. E166 contacts Mg(2+). Deamido-NAD(+) contacts are provided by K174 and D181. 2 residues coordinate ATP: K190 and T212. 261 to 262 (HK) contributes to the deamido-NAD(+) binding site.

It belongs to the NAD synthetase family. As to quaternary structure, homodimer.

The catalysed reaction is deamido-NAD(+) + NH4(+) + ATP = AMP + diphosphate + NAD(+) + H(+). It functions in the pathway cofactor biosynthesis; NAD(+) biosynthesis; NAD(+) from deamido-NAD(+) (ammonia route): step 1/1. Catalyzes the ATP-dependent amidation of deamido-NAD to form NAD. Uses ammonia as a nitrogen source. This chain is NH(3)-dependent NAD(+) synthetase, found in Enterococcus faecalis (strain ATCC 700802 / V583).